The sequence spans 260 residues: Flap endonuclease Xni (260 aa).

Asp-104 serves as a coordination point for Mg(2+). Residues 160–249 (VSPQQLTDYW…LNGNLQQLRL (90 aa)) enclose the 5'-3' exonuclease domain. Leu-171, Ala-172, Pro-180, Val-182, and Ile-185 together coordinate K(+). Positions 184–189 (GIGPKS) are interaction with DNA.

It belongs to the Xni family. Mg(2+) serves as cofactor. K(+) is required as a cofactor.

Has flap endonuclease activity. During DNA replication, flap endonucleases cleave the 5'-overhanging flap structure that is generated by displacement synthesis when DNA polymerase encounters the 5'-end of a downstream Okazaki fragment. This is Flap endonuclease Xni from Pectobacterium carotovorum subsp. carotovorum (strain PC1).